A 272-amino-acid chain; its full sequence is ATP synthase subunit a (272 aa).

5 helical membrane-spanning segments follow: residues 41 to 61 (VLNIDSMFFSLLLGAIFLLIF), 101 to 121 (LIAPLALTIFVWVFLMNLMDL), 143 to 165 (VPSADVNITLSMALGVFILILYY), 221 to 241 (LIFILIAGLLPWWSQWILNVP), and 243 to 263 (AIFHILIITLQAFIFMVLTIV).

Belongs to the ATPase A chain family. As to quaternary structure, F-type ATPases have 2 components, CF(1) - the catalytic core - and CF(0) - the membrane proton channel. CF(1) has five subunits: alpha(3), beta(3), gamma(1), delta(1), epsilon(1). CF(0) has three main subunits: a(1), b(2) and c(9-12). The alpha and beta chains form an alternating ring which encloses part of the gamma chain. CF(1) is attached to CF(0) by a central stalk formed by the gamma and epsilon chains, while a peripheral stalk is formed by the delta and b chains.

It is found in the cell inner membrane. Functionally, key component of the proton channel; it plays a direct role in the translocation of protons across the membrane. The protein is ATP synthase subunit a of Sodalis glossinidius (strain morsitans).